Consider the following 431-residue polypeptide: Serine hydroxymethyltransferase (431 aa).

Residues Leu-127 and 131-133 (GHL) each bind (6S)-5,6,7,8-tetrahydrofolate. The residue at position 236 (Lys-236) is an N6-(pyridoxal phosphate)lysine.

It belongs to the SHMT family. As to quaternary structure, homodimer. It depends on pyridoxal 5'-phosphate as a cofactor.

It localises to the cytoplasm. The catalysed reaction is (6R)-5,10-methylene-5,6,7,8-tetrahydrofolate + glycine + H2O = (6S)-5,6,7,8-tetrahydrofolate + L-serine. The protein operates within one-carbon metabolism; tetrahydrofolate interconversion. Its pathway is amino-acid biosynthesis; glycine biosynthesis; glycine from L-serine: step 1/1. Its function is as follows. Catalyzes the reversible interconversion of serine and glycine with tetrahydrofolate (THF) serving as the one-carbon carrier. This reaction serves as the major source of one-carbon groups required for the biosynthesis of purines, thymidylate, methionine, and other important biomolecules. Also exhibits THF-independent aldolase activity toward beta-hydroxyamino acids, producing glycine and aldehydes, via a retro-aldol mechanism. The chain is Serine hydroxymethyltransferase from Granulibacter bethesdensis (strain ATCC BAA-1260 / CGDNIH1).